A 65-amino-acid polypeptide reads, in one-letter code: SPbeta prophage-derived uncharacterized protein YopU (65 aa).

In Bacillus subtilis (strain 168), this protein is SPbeta prophage-derived uncharacterized protein YopU (yopU).